The following is a 365-amino-acid chain: Probable UDP-arabinopyranose mutase 1 (365 aa).

The DXD motif motif lies at 100-102; that stretch reads DDD. An N-linked (Glc...) arginine glycan is attached at arginine 148.

This sequence belongs to the RGP family. In terms of assembly, homopentamer or homohexamer. The cofactor is Mn(2+). It depends on Mg(2+) as a cofactor. In terms of processing, reversibly glycosylated by UDP-glucose, UDP-xylose and UDP-galactose, but not UDP-mannose. In terms of tissue distribution, expressed in all tissues tested, including root, tuber, leaf, petiole, shoot, stolon and stem.

Its subcellular location is the secreted. The protein localises to the cell wall. It localises to the cell junction. It is found in the plasmodesma. The protein resides in the golgi apparatus. The enzyme catalyses UDP-beta-L-arabinofuranose = UDP-beta-L-arabinopyranose. Functionally, probable UDP-L-arabinose mutase involved in the biosynthesis of cell wall non-cellulosic polysaccharides. Was initially shown to possess an autoglycosylating activity which is dependent on the presence of UDP-glucose and manganese. This Solanum tuberosum (Potato) protein is Probable UDP-arabinopyranose mutase 1.